Reading from the N-terminus, the 1045-residue chain is Fibrosin-1-like protein (1045 aa).

Basic residues predominate over residues 1–12 (MEAKVRPSRRSR). 2 disordered regions span residues 1–86 (MEAK…DGFA) and 99–315 (DMAL…THVP). The segment covering 13–28 (AQRDRGRRREAARDAR) has biased composition (basic and acidic residues). Positions 48-63 (GLRGAPPRGAAPAPRT) are enriched in low complexity. A compositionally biased stretch (basic and acidic residues) spans 99 to 123 (DMALKPHERKEKWERRLIKKPRESE). Residues 183-197 (EATSSRDPLSDSSAH) show a composition bias toward polar residues. Positions 270–280 (HAAPCPGPPPG) are enriched in pro residues. S340 is modified (phosphoserine). Basic residues predominate over residues 443–457 (QHTHQHTHQHTHQHQ). Disordered stretches follow at residues 443–462 (QHTHQHTHQHTHQHQHTFAP) and 719–753 (EGSSVHGLPSPHEAWNRLHRAPPSFPAPPPWPKSV). The segment covering 741 to 750 (PSFPAPPPWP) has biased composition (pro residues). Position 790 is a phosphoserine (S790). Disordered stretches follow at residues 809–880 (ELGR…APLQ) and 910–961 (AAAP…PALD). Residues 817 to 837 (AEREAEPRVKESRSPAKEEAA) show a composition bias toward basic and acidic residues. K858 participates in a covalent cross-link: Glycyl lysine isopeptide (Lys-Gly) (interchain with G-Cter in SUMO2). Residues 910–922 (AAAPAPGSAALLE) are compositionally biased toward low complexity. Residues 923 to 949 (PPERPYRDREPHGYSPERLRGELERAR) are compositionally biased toward basic and acidic residues. Phosphoserine is present on residues S937 and S977. Residues T989 and T1010 each carry the phosphothreonine modification. Residues 991–1045 (PAAAALGAPPPLVTAAGPPTPPGPPRSRTTPLGGLGPGEARDYSPSRNPPEVEAR) are disordered. The span at 998-1015 (APPPLVTAAGPPTPPGPP) shows a compositional bias: pro residues. A compositionally biased stretch (basic and acidic residues) spans 1029 to 1045 (EARDYSPSRNPPEVEAR).

This sequence belongs to the AUTS2 family.

The sequence is that of Fibrosin-1-like protein (FBRSL1) from Homo sapiens (Human).